The chain runs to 561 residues: Urocanate hydratase (561 aa).

NAD(+) contacts are provided by residues 52-53, Gln130, 176-178, Glu196, Arg201, 242-243, 263-267, 273-274, and Tyr322; these read GG, GMG, NA, QTSAH, and YL. Cys410 is an active-site residue. Gly492 is a binding site for NAD(+).

It belongs to the urocanase family. It depends on NAD(+) as a cofactor.

Its subcellular location is the cytoplasm. It catalyses the reaction 4-imidazolone-5-propanoate = trans-urocanate + H2O. Its pathway is amino-acid degradation; L-histidine degradation into L-glutamate; N-formimidoyl-L-glutamate from L-histidine: step 2/3. Functionally, catalyzes the conversion of urocanate to 4-imidazolone-5-propionate. In Salmonella typhi, this protein is Urocanate hydratase.